A 1125-amino-acid polypeptide reads, in one-letter code: MNALQQKCRPKHQVLVLKCYPRTIKGAVDVKPNSSELSYLLFYCQSRRAKIQKVGSFLEKKTASDVYHQRIGNVQVTLQILAALIEKSPKDLPLFASCVLSILEQVLKSSDITMVESSIPTFQAFCENHDPTSLAADQAYFRQYVSVVQQYASLASTRPAPGKAQHSKPIALRWRNAGLEAIRSVASSDALSSMVARQYDILVPMILENLWTENEDFLDVLLQRVQGDNNVEDAPLLRRRTSNATAQPSETTGGEPGPNPIAFLGTAVDVDKLAEEDIGVLAMQCLRQVFVAPSRSQTHNPTIALLRFIEERVDQNEQVVKRDAHGKDNGWAIKVFLMAARWAPVADRFTILLTAIEVLTQRPLTDDNLRHHNTQAAMISALLRSDVNLIGLSVMDVLLNLLRHMQRLVQMPGDPDSMRVEDETIGTDEGAIGQRRELLFRLQQCVGDLATHVYYADQISDMIQTILLKLRPSRPTSPPNSSPNGERSDNGAAEDQPLESLFALTVAKIAALKAIKAILWVASPRTKMSGGHINLSRNRVPIQTWDGTQWLLRDPDGLVRKAYVDAVVTWLDRETTPADSLARDESARTTLKNRAAQENNLARRVVSSASARVDKSANAPRSHFLQLLHLAIYDHALQFVDYENDLVLLHVLLAKLVSQLGVNAAKFGIPMIFRLQEDIQDVETPLGKVRIGSLVHGYLWTLTEKFDCEGTAPGSAIHGEIIRRRSKNFWVEGINIPAPAVDLVGTPGQARPPPQMNMRDLESEALLPFDERASLVDCICTGYQELATSPPTSPTTSPGRNFTHPMLGSTLSATPKDETQREVPAQFRELMLGDWTREAVLANTQAGSSQTASLNGTNGTHRNTVNNNNRLGVNGVTSPNGSNSNLRPSSSPTGPNGVQAGRTRKTSIRSNGGGGSPAHSTYRAKAQQPVTSVEQLKAVLSGHLQPPPTSHGINFQHSDDSDDSLVSYDMAPSELSFNPAASGSRQGSPGNTSQAASSPPRRTSQDRTQQLKFGGPLVPGEESVVNGAGGQEGSNGAAGNLGVPISRTTSRTQPQATTAHTTLPRPSTSSKRSIKSRAGSRAGPMSSSWLGEKPPAMDLAALLKGIDSASISDIKSLGAGGKPPY.

Disordered regions lie at residues Arg-240–Ile-261, Arg-471–Ala-493, Thr-788–Thr-819, and Gln-845–Lys-1093. Positions Ser-242–Thr-252 are enriched in polar residues. The span at Thr-788 to Pro-798 shows a compositional bias: low complexity. The segment covering Gln-845–Leu-854 has biased composition (polar residues). Low complexity predominate over residues Asn-855–Thr-877. 3 stretches are compositionally biased toward polar residues: residues Ser-878–Asn-896, Leu-975–Leu-1011, and Ser-1046–Lys-1071.

It belongs to the EFR3 family.

The sequence is that of Protein efr-3 (efr-3) from Neurospora crassa (strain ATCC 24698 / 74-OR23-1A / CBS 708.71 / DSM 1257 / FGSC 987).